The following is a 192-amino-acid chain: Thymidine kinase (192 aa).

ATP is bound by residues 9-16 (SAMNAGKT) and 88-91 (DECH). Catalysis depends on E89, which acts as the Proton acceptor. C146, C148, C183, and H186 together coordinate Zn(2+).

Belongs to the thymidine kinase family. Homotetramer.

It is found in the cytoplasm. It catalyses the reaction thymidine + ATP = dTMP + ADP + H(+). The chain is Thymidine kinase from Blochmanniella floridana.